A 349-amino-acid polypeptide reads, in one-letter code: Aspartate carbamoyltransferase catalytic subunit (349 aa).

Residues R59 and T60 each contribute to the carbamoyl phosphate site. Residue K87 coordinates L-aspartate. Residues R109, H142, and Q145 each coordinate carbamoyl phosphate. L-aspartate contacts are provided by R182 and R253. Carbamoyl phosphate contacts are provided by G294 and P295.

It belongs to the aspartate/ornithine carbamoyltransferase superfamily. ATCase family. In terms of assembly, heterododecamer (2C3:3R2) of six catalytic PyrB chains organized as two trimers (C3), and six regulatory PyrI chains organized as three dimers (R2).

It carries out the reaction carbamoyl phosphate + L-aspartate = N-carbamoyl-L-aspartate + phosphate + H(+). Its pathway is pyrimidine metabolism; UMP biosynthesis via de novo pathway; (S)-dihydroorotate from bicarbonate: step 2/3. Functionally, catalyzes the condensation of carbamoyl phosphate and aspartate to form carbamoyl aspartate and inorganic phosphate, the committed step in the de novo pyrimidine nucleotide biosynthesis pathway. In Synechococcus sp. (strain CC9902), this protein is Aspartate carbamoyltransferase catalytic subunit.